A 479-amino-acid polypeptide reads, in one-letter code: NADH-quinone oxidoreductase subunit N (479 aa).

The next 14 membrane-spanning stretches (helical) occupy residues 3 to 23 (MLYG…FQLI), 40 to 60 (IGFA…FNGI), 77 to 97 (IIIL…IKVA), 102 to 122 (HSEY…LVSA), 125 to 145 (FMVM…LTTF), 159 to 179 (YFIL…LVYG), 200 to 220 (MAVL…KLSI), 234 to 254 (APLV…LALL), 268 to 288 (FFYI…VGAF), 299 to 319 (FIAY…VANS), 327 to 347 (ISYF…AIII), 373 to 393 (SILI…AGFI), 409 to 429 (ELII…LNIV), and 452 to 472 (LVSI…MLFG).

This sequence belongs to the complex I subunit 2 family. In terms of assembly, NDH-1 is composed of 14 different subunits. Subunits NuoA, H, J, K, L, M, N constitute the membrane sector of the complex.

Its subcellular location is the cell inner membrane. The catalysed reaction is a quinone + NADH + 5 H(+)(in) = a quinol + NAD(+) + 4 H(+)(out). Functionally, NDH-1 shuttles electrons from NADH, via FMN and iron-sulfur (Fe-S) centers, to quinones in the respiratory chain. The immediate electron acceptor for the enzyme in this species is believed to be ubiquinone. Couples the redox reaction to proton translocation (for every two electrons transferred, four hydrogen ions are translocated across the cytoplasmic membrane), and thus conserves the redox energy in a proton gradient. The sequence is that of NADH-quinone oxidoreductase subunit N from Orientia tsutsugamushi (strain Ikeda) (Rickettsia tsutsugamushi).